The primary structure comprises 172 residues: Peptide deformylase (172 aa).

Residues Cys94 and His136 each coordinate Fe cation. Glu137 is an active-site residue. His140 provides a ligand contact to Fe cation.

Belongs to the polypeptide deformylase family. Fe(2+) serves as cofactor.

It catalyses the reaction N-terminal N-formyl-L-methionyl-[peptide] + H2O = N-terminal L-methionyl-[peptide] + formate. Its function is as follows. Removes the formyl group from the N-terminal Met of newly synthesized proteins. Requires at least a dipeptide for an efficient rate of reaction. N-terminal L-methionine is a prerequisite for activity but the enzyme has broad specificity at other positions. The protein is Peptide deformylase of Pelagibacter ubique (strain HTCC1062).